Here is a 237-residue protein sequence, read N- to C-terminus: Putative biotin ligase (237 aa).

The BPL/LPL catalytic domain maps to 1-191 (MEIIHLSEID…KKYKKYSITI (191 aa)).

Belongs to the biotin--protein ligase family.

It carries out the reaction biotin + L-lysyl-[protein] + ATP = N(6)-biotinyl-L-lysyl-[protein] + AMP + diphosphate + H(+). This Methanocaldococcus jannaschii (strain ATCC 43067 / DSM 2661 / JAL-1 / JCM 10045 / NBRC 100440) (Methanococcus jannaschii) protein is Putative biotin ligase.